Here is a 572-residue protein sequence, read N- to C-terminus: Urease subunit alpha (572 aa).

A Urease domain is found at 136–572 (GGIDTHIHFI…VPLGQRYFLF (437 aa)). Positions 141, 143, and 224 each coordinate Ni(2+). K224 is subject to N6-carboxylysine. Position 226 (H226) interacts with substrate. Residues H253 and H279 each contribute to the Ni(2+) site. Catalysis depends on H327, which acts as the Proton donor. D367 is a binding site for Ni(2+).

This sequence belongs to the metallo-dependent hydrolases superfamily. Urease alpha subunit family. As to quaternary structure, heterotrimer of UreA (gamma), UreB (beta) and UreC (alpha) subunits. Three heterotrimers associate to form the active enzyme. Ni cation serves as cofactor. Post-translationally, carboxylation allows a single lysine to coordinate two nickel ions.

Its subcellular location is the cytoplasm. The catalysed reaction is urea + 2 H2O + H(+) = hydrogencarbonate + 2 NH4(+). It participates in nitrogen metabolism; urea degradation; CO(2) and NH(3) from urea (urease route): step 1/1. This is Urease subunit alpha from Haemophilus influenzae (strain 86-028NP).